Reading from the N-terminus, the 694-residue chain is Polyribonucleotide nucleotidyltransferase (694 aa).

2 residues coordinate Mg(2+): aspartate 485 and aspartate 491. The region spanning 552–611 (PRIETMQIKPNKIATVIGPGGKQIRQIIEEAGVQIDINDSGLVSISASSPQAIEKAKSII) is the KH domain. The S1 motif domain maps to 621–689 (GKIYEGRVTS…EKGQYKLSHK (69 aa)).

Belongs to the polyribonucleotide nucleotidyltransferase family. The cofactor is Mg(2+).

The protein resides in the cytoplasm. The catalysed reaction is RNA(n+1) + phosphate = RNA(n) + a ribonucleoside 5'-diphosphate. Its function is as follows. Involved in mRNA degradation. Catalyzes the phosphorolysis of single-stranded polyribonucleotides processively in the 3'- to 5'-direction. The polypeptide is Polyribonucleotide nucleotidyltransferase (Chlamydia abortus (strain DSM 27085 / S26/3) (Chlamydophila abortus)).